Reading from the N-terminus, the 86-residue chain is U2-sicaritoxin-Li1b (86 aa).

A signal peptide spans 1-20 (MKIELFLVVIFALAIHMATA). The propeptide occupies 21-33 (EEVIESDIEPAER). 4 disulfides stabilise this stretch: Cys-35/Cys-53, Cys-42/Cys-62, Cys-52/Cys-71, and Cys-64/Cys-69. Lys-85 carries the post-translational modification Lysine amide.

It belongs to the neurotoxin 39 family. Expressed by the venom gland.

It localises to the secreted. Functionally, toxin active against S.frugiperda larvae. May act on sodium channels (Nav). This chain is U2-sicaritoxin-Li1b, found in Loxosceles intermedia (Brown spider).